A 288-amino-acid chain; its full sequence is Syntaxin PEP12 (288 aa).

The Cytoplasmic segment spans residues 1 to 268 (MSEDEFFGGD…RYQKRTSRWR (268 aa)). Phosphoserine occurs at positions 2 and 23. The t-SNARE coiled-coil homology domain occupies 195–257 (QNLIEQRDQE…QLASDELRKA (63 aa)). Residues 269-288 (VYLLIVLLVMLLFIFLIMKL) traverse the membrane as a helical; Anchor for type IV membrane protein segment.

It belongs to the syntaxin family. Ubiquitinated.

It is found in the membrane. Its function is as follows. Plays a role in the sorting and targeting of vacuolar proteases. In Saccharomyces cerevisiae (strain ATCC 204508 / S288c) (Baker's yeast), this protein is Syntaxin PEP12 (PEP12).